A 206-amino-acid chain; its full sequence is LysM and putative peptidoglycan-binding domain-containing protein 2 (206 aa).

One can recognise a LysM domain in the interval I59–I103. The tract at residues A184–H206 is disordered. The span at R186 to G197 shows a compositional bias: basic and acidic residues.

The sequence is that of LysM and putative peptidoglycan-binding domain-containing protein 2 (lysmd2) from Xenopus laevis (African clawed frog).